We begin with the raw amino-acid sequence, 343 residues long: N-acetyl-gamma-glutamyl-phosphate reductase (343 aa).

Cys147 is a catalytic residue.

Belongs to the NAGSA dehydrogenase family. Type 1 subfamily.

It is found in the cytoplasm. It catalyses the reaction N-acetyl-L-glutamate 5-semialdehyde + phosphate + NADP(+) = N-acetyl-L-glutamyl 5-phosphate + NADPH + H(+). It functions in the pathway amino-acid biosynthesis; L-arginine biosynthesis; N(2)-acetyl-L-ornithine from L-glutamate: step 3/4. Catalyzes the NADPH-dependent reduction of N-acetyl-5-glutamyl phosphate to yield N-acetyl-L-glutamate 5-semialdehyde. The sequence is that of N-acetyl-gamma-glutamyl-phosphate reductase from Staphylococcus aureus (strain USA300).